The sequence spans 823 residues: Kinesin-like protein KIN-7N (823 aa).

In terms of domain architecture, Kinesin motor spans 3–325 (KICVAVRVRP…LQFASRAKRI (323 aa)). Position 83–90 (83–90 (GQTSSGKT)) interacts with ATP. Coiled coils occupy residues 341–414 (LKRQ…NLNN), 527–557 (RENH…FNEQ), and 696–786 (EKKL…MEEE).

The protein belongs to the TRAFAC class myosin-kinesin ATPase superfamily. Kinesin family. KIN-7 subfamily.

The protein is Kinesin-like protein KIN-7N of Arabidopsis thaliana (Mouse-ear cress).